Here is a 257-residue protein sequence, read N- to C-terminus: Adenylate kinase (257 aa).

52-57 (GAGKGT) serves as a coordination point for ATP. The interval 72–101 (ATGDMLRSQVAKKTELGKEAKKIMDQGGLV) is NMP. Residues threonine 73, arginine 78, 99–101 (GLV), 128–131 (GFPR), and glutamine 135 each bind AMP. Residues 169 to 206 (GRLVHPASGRSYHKIFNPPKNDMKDDVTGEPLIQRSDD) are LID. ATP-binding positions include arginine 170 and 179–180 (SY). The AMP site is built by arginine 203 and arginine 214. An ATP-binding site is contributed by glutamine 242.

This sequence belongs to the adenylate kinase family. AK2 subfamily. Monomer.

The protein resides in the cytoplasm. The protein localises to the cytosol. It localises to the mitochondrion intermembrane space. The catalysed reaction is AMP + ATP = 2 ADP. Catalyzes the reversible transfer of the terminal phosphate group between ATP and AMP. Plays an important role in cellular energy homeostasis and in adenine nucleotide metabolism. Adenylate kinase activity is critical for regulation of the phosphate utilization and the AMP de novo biosynthesis pathways. This chain is Adenylate kinase (adk1), found in Neosartorya fischeri (strain ATCC 1020 / DSM 3700 / CBS 544.65 / FGSC A1164 / JCM 1740 / NRRL 181 / WB 181) (Aspergillus fischerianus).